Reading from the N-terminus, the 131-residue chain is Squamosa promoter-binding protein 1 (131 aa).

Positions 1–10 (MDTSKGEGKR) are enriched in basic and acidic residues. The segment at 1 to 52 (MDTSKGEGKRVIKLPGSQEQGEEEDDIGEDSKKTRALTPSGKRASGSTQRSC) is disordered. An SBP-type zinc finger spans residues 49-126 (QRSCQVENCA…AGHNERRRKS (78 aa)). Zn(2+)-binding residues include Cys-52, Cys-57, Cys-74, His-77, Cys-93, Cys-96, His-100, and Cys-112. A Bipartite nuclear localization signal motif is present at residues 109-125 (KRSCRRRLAGHNERRRK).

Its subcellular location is the nucleus. In terms of biological role, probable transcriptional factor. Binds to the promoter of the SQUAMOSA gene. The polypeptide is Squamosa promoter-binding protein 1 (SBP1) (Antirrhinum majus (Garden snapdragon)).